The chain runs to 271 residues: NH(3)-dependent NAD(+) synthetase (271 aa).

G43 to S50 contacts ATP. D49 serves as a coordination point for Mg(2+). R137 provides a ligand contact to deamido-NAD(+). T157 contributes to the ATP binding site. E162 contacts Mg(2+). K170 and D177 together coordinate deamido-NAD(+). K186 and T208 together coordinate ATP. H257–K258 serves as a coordination point for deamido-NAD(+).

The protein belongs to the NAD synthetase family. Homodimer.

It catalyses the reaction deamido-NAD(+) + NH4(+) + ATP = AMP + diphosphate + NAD(+) + H(+). The protein operates within cofactor biosynthesis; NAD(+) biosynthesis; NAD(+) from deamido-NAD(+) (ammonia route): step 1/1. Catalyzes the ATP-dependent amidation of deamido-NAD to form NAD. Uses ammonia as a nitrogen source. The chain is NH(3)-dependent NAD(+) synthetase from Exiguobacterium sp. (strain ATCC BAA-1283 / AT1b).